Here is a 300-residue protein sequence, read N- to C-terminus: Pantoate kinase (300 aa).

Belongs to the GHMP kinase family. PoK subfamily. In terms of assembly, homodimer.

The catalysed reaction is (R)-pantoate + ATP = (R)-4-phosphopantoate + ADP + H(+). It participates in cofactor biosynthesis; coenzyme A biosynthesis. Moderately stimulated in the presence of potassium cations. Inhibited by increasing concentrations of pantoate. Activity is not affected by CoA/acetyl-CoA. Its function is as follows. Phosphorylates (R)-pantoate to form (R)-4-phosphopantoate in the CoA biosynthesis pathway. Displays broad nucleotide specificity and utilizes ATP, GTP, UTP, and CTP with comparable catalytic efficiencies. The protein is Pantoate kinase of Thermococcus kodakarensis (strain ATCC BAA-918 / JCM 12380 / KOD1) (Pyrococcus kodakaraensis (strain KOD1)).